A 317-amino-acid polypeptide reads, in one-letter code: Putative 2-hydroxyacid dehydrogenase SE_1879 (317 aa).

Residues 155–156 (EI), 234–236 (AGR), and Asp-260 each bind NAD(+). Arg-236 is a catalytic residue. Residue Glu-265 is part of the active site. His-283 functions as the Proton donor in the catalytic mechanism. 283–286 (HIGN) is an NAD(+) binding site.

This sequence belongs to the D-isomer specific 2-hydroxyacid dehydrogenase family.

This Staphylococcus epidermidis (strain ATCC 12228 / FDA PCI 1200) protein is Putative 2-hydroxyacid dehydrogenase SE_1879.